Here is a 241-residue protein sequence, read N- to C-terminus: MORN repeat-containing protein 3 (241 aa).

The interaction with MDM2 stretch occupies residues cysteine 6–glycine 35. MORN repeat units follow at residues tyrosine 38–alanine 60, tyrosine 62–threonine 84, tyrosine 91–tyrosine 113, tyrosine 114–isoleucine 136, tyrosine 137–arginine 159, tyrosine 160–glutamine 182, and phenylalanine 184–glutamate 205. Residues serine 76 to lysine 100 form an interaction with SIRT1 region. An interaction with TP53 region spans residues alanine 206–glutamate 240.

Interacts with MEIG1. Interacts with TP53, MDM2 and SIRT1; the interactions mediate post-transcriptional modifications of TP53 by MDM2 and SIRT1. As to expression, expressed in testis (at protein level).

It localises to the cytoplasmic vesicle. The protein localises to the secretory vesicle. The protein resides in the acrosome. Its function is as follows. Assembles a suppression complex (suppresome) by tethering SIRT1 and MDM2 to regulate composite modifications of p53/TP53. Confers both deacetylation-mediated functional inactivation, by SIRT1, and ubiquitination-dependent degradation, by MDM2, of p53/TP53, promoting a proliferative and cell survival behaviors. May play a role in the regulation of spermatogenesis. The chain is MORN repeat-containing protein 3 (Morn3) from Mus musculus (Mouse).